We begin with the raw amino-acid sequence, 288 residues long: Borealin (288 aa).

A required for interaction with INCENP region spans residues M1 to V58. The tract at residues M1 to T88 is required for centromere localization. The interval M1 to A149 is required for interaction with SENP3. The tract at residues G10–K109 is required to form a minimal CPC core complex that localizes to the central spindle and midbody and properly executes the role of the CPC during cytokinesis. Residues K20–G78 form a required for interaction with INCENP and BIRC5 region. A Phosphothreonine; by TTK modification is found at T88. A Citrulline modification is found at R91. The residue at position 94 (T94) is a Phosphothreonine; by TTK. T106 bears the Phosphothreonine mark. S110 bears the Phosphoserine mark. Residues K124–G134 show a composition bias toward acidic residues. A disordered region spans residues K124–L173. The segment covering R140–T161 has biased composition (basic residues). K144 participates in a covalent cross-link: Glycyl lysine isopeptide (Lys-Gly) (interchain with G-Cter in SUMO2). The residue at position 174 (S174) is a Phosphoserine; by AURKB. Residues T197 and T212 each carry the phosphothreonine modification. Residues S227, S232, S246, and S252 each carry the phosphoserine modification.

It belongs to the borealin family. In terms of assembly, may form homooligomers and homodimers. Component of the chromosomal passenger complex (CPC) composed of at least BIRC5/survivin, CDCA8/borealin, INCENP, AURKB or AURKC; in the complex forms a triple-helix bundle-based subcomplex with INCENP and BIRC5. Interacts with SENP3, UBE2I and RANBP2. Interacts (phosphorylated) with SGO1 and SGO2; the association is dependent on CDK1. Post-translationally, phosphorylated by TTK, essentially at Thr-88 and Thr-94. Phosphorylation (probably by CDK1) promotes targeting of the CPC to centromeric DNA. Sumoylated by UBE2I and RANBP2. Desumoylated by SENP3 through the removal of SUMO2 and SUMO3. In terms of processing, citrullinated by PADI4.

Its subcellular location is the nucleus. The protein localises to the nucleolus. It is found in the cytoplasm. The protein resides in the chromosome. It localises to the centromere. Its subcellular location is the cytoskeleton. The protein localises to the spindle. Its function is as follows. Component of the chromosomal passenger complex (CPC), a complex that acts as a key regulator of mitosis. The CPC complex has essential functions at the centromere in ensuring correct chromosome alignment and segregation and is required for chromatin-induced microtubule stabilization and spindle assembly. In the complex, it may be required to direct the CPC to centromeric DNA. The protein is Borealin (Cdca8) of Rattus norvegicus (Rat).